Here is a 150-residue protein sequence, read N- to C-terminus: Meiotic expression up-regulated protein 15 (150 aa).

The sequence is that of Meiotic expression up-regulated protein 15 (meu15) from Schizosaccharomyces pombe (strain 972 / ATCC 24843) (Fission yeast).